Consider the following 336-residue polypeptide: Holliday junction branch migration complex subunit RuvB (336 aa).

Residues 4 to 184 are large ATPase domain (RuvB-L); that stretch reads SDRLISSQSI…FGIVQRLEYY (181 aa). ATP is bound by residues Ile-23, Arg-24, Gly-65, Lys-68, Thr-69, Thr-70, 131–133, Arg-174, Tyr-184, and Arg-221; that span reads EDY. Thr-69 contributes to the Mg(2+) binding site. The segment at 185–255 is small ATPAse domain (RuvB-S); sequence SVDSLTQIVA…MAQQALEMLE (71 aa). The interval 258 to 336 is head domain (RuvB-H); the sequence is QHGFDLMDRK…HFGFSAIEQE (79 aa). The DNA site is built by Arg-313 and Arg-318.

The protein belongs to the RuvB family. Homohexamer. Forms an RuvA(8)-RuvB(12)-Holliday junction (HJ) complex. HJ DNA is sandwiched between 2 RuvA tetramers; dsDNA enters through RuvA and exits via RuvB. An RuvB hexamer assembles on each DNA strand where it exits the tetramer. Each RuvB hexamer is contacted by two RuvA subunits (via domain III) on 2 adjacent RuvB subunits; this complex drives branch migration. In the full resolvosome a probable DNA-RuvA(4)-RuvB(12)-RuvC(2) complex forms which resolves the HJ.

The protein resides in the cytoplasm. The catalysed reaction is ATP + H2O = ADP + phosphate + H(+). In terms of biological role, the RuvA-RuvB-RuvC complex processes Holliday junction (HJ) DNA during genetic recombination and DNA repair, while the RuvA-RuvB complex plays an important role in the rescue of blocked DNA replication forks via replication fork reversal (RFR). RuvA specifically binds to HJ cruciform DNA, conferring on it an open structure. The RuvB hexamer acts as an ATP-dependent pump, pulling dsDNA into and through the RuvAB complex. RuvB forms 2 homohexamers on either side of HJ DNA bound by 1 or 2 RuvA tetramers; 4 subunits per hexamer contact DNA at a time. Coordinated motions by a converter formed by DNA-disengaged RuvB subunits stimulates ATP hydrolysis and nucleotide exchange. Immobilization of the converter enables RuvB to convert the ATP-contained energy into a lever motion, pulling 2 nucleotides of DNA out of the RuvA tetramer per ATP hydrolyzed, thus driving DNA branch migration. The RuvB motors rotate together with the DNA substrate, which together with the progressing nucleotide cycle form the mechanistic basis for DNA recombination by continuous HJ branch migration. Branch migration allows RuvC to scan DNA until it finds its consensus sequence, where it cleaves and resolves cruciform DNA. In Legionella pneumophila (strain Lens), this protein is Holliday junction branch migration complex subunit RuvB.